A 107-amino-acid chain; its full sequence is Integration host factor subunit beta (107 aa).

The interval 87-107 is disordered; that stretch reads RERVNNGTRKNGGSADAASGG.

It belongs to the bacterial histone-like protein family. In terms of assembly, heterodimer of an alpha and a beta chain.

In terms of biological role, this protein is one of the two subunits of integration host factor, a specific DNA-binding protein that functions in genetic recombination as well as in transcriptional and translational control. This chain is Integration host factor subunit beta, found in Granulibacter bethesdensis (strain ATCC BAA-1260 / CGDNIH1).